The following is a 132-amino-acid chain: MQRVTLTLDDDLLAALDALSARRGYHNRSEAVRDILRDALNQDPPSPESRRGYAVLSYVYEHEKRELASRLVATQHHHHDLSVATLHVHISHDDCLEIAVLKGDMAEVQHFADDVIAQRGVRHGHLQCLADD.

4 residues coordinate Ni(2+): H76, H87, H89, and C95.

The protein belongs to the transcriptional regulatory CopG/NikR family. As to quaternary structure, homotetramer. Requires Ni(2+) as cofactor.

Transcriptional repressor of the nikABCDE operon. Is active in the presence of excessive concentrations of intracellular nickel. The protein is Nickel-responsive regulator of Klebsiella pneumoniae subsp. pneumoniae (strain ATCC 700721 / MGH 78578).